We begin with the raw amino-acid sequence, 1322 residues long: WD repeat-containing protein 17 (1322 aa).

WD repeat units lie at residues 81–121 (EHKK…VIAK), 123–164 (DSTK…SGVI), 171–211 (SFLS…QKHV), 221–261 (DEED…CITT), and 266–307 (SAAA…PIDN). The disordered stretch occupies residues 328–352 (KFSVQSPTKNHYTSSTSEAVPPPTL). Residues 330-345 (SVQSPTKNHYTSSTSE) are compositionally biased toward polar residues. 7 WD repeats span residues 391–431 (GHVE…AVYT), 434–474 (GNEG…IIQR), 478–518 (HGTN…LHKY), 519–559 (KHPA…DQPL), 564–604 (GHTA…CINI), 607–647 (GHTA…CVDT), and 650–690 (DHGA…TPVQ).

This chain is WD repeat-containing protein 17 (WDR17), found in Homo sapiens (Human).